Reading from the N-terminus, the 457-residue chain is Argininosuccinate lyase (457 aa).

The protein belongs to the lyase 1 family. Argininosuccinate lyase subfamily.

It localises to the cytoplasm. The catalysed reaction is 2-(N(omega)-L-arginino)succinate = fumarate + L-arginine. The protein operates within amino-acid biosynthesis; L-arginine biosynthesis; L-arginine from L-ornithine and carbamoyl phosphate: step 3/3. The chain is Argininosuccinate lyase from Pasteurella multocida (strain Pm70).